Consider the following 215-residue polypeptide: N-(5'-phosphoribosyl)anthranilate isomerase (215 aa).

Belongs to the TrpF family.

The enzyme catalyses N-(5-phospho-beta-D-ribosyl)anthranilate = 1-(2-carboxyphenylamino)-1-deoxy-D-ribulose 5-phosphate. The protein operates within amino-acid biosynthesis; L-tryptophan biosynthesis; L-tryptophan from chorismate: step 3/5. The sequence is that of N-(5'-phosphoribosyl)anthranilate isomerase from Parvibaculum lavamentivorans (strain DS-1 / DSM 13023 / NCIMB 13966).